A 164-amino-acid polypeptide reads, in one-letter code: Protein PPLZ02 (164 aa).

A DNA-binding region (AP2/ERF) is located at residues 7-64 (RYRGFRQRHWGSWVSEIRHSILKTRIWQGTFESAEDAARAYDEAARLMCGTRARTNFP).

It localises to the nucleus. Essential for all lupin cells independent of the respective tissue. This Lupinus polyphyllus (Large-leaved lupine) protein is Protein PPLZ02 (PPLZ02).